The following is a 900-amino-acid chain: Trehalose-phosphatase (900 aa).

2 disordered regions span residues 76 to 109 (SRLF…EEDP) and 874 to 900 (VKHS…SYKN). The span at 82–108 (KNRDKSENGEKGENDLHAKEEREKEED) shows a compositional bias: basic and acidic residues.

This sequence in the C-terminal section; belongs to the trehalose phosphatase family. The protein in the N-terminal section; belongs to the glycosyltransferase 20 family. Mg(2+) serves as cofactor.

It catalyses the reaction alpha,alpha-trehalose 6-phosphate + H2O = alpha,alpha-trehalose + phosphate. It participates in carbohydrate biosynthesis. Its function is as follows. Phosphatase catalytic subunit of the trehalose synthase complex that catalyzes the production of trehalose from glucose-6-phosphate and UDP-alpha-D-glucose in a two step process. The protein is Trehalose-phosphatase of Zygosaccharomyces rouxii.